The sequence spans 277 residues: uncharacterized protein (277 aa).

This is an uncharacterized protein from Acanthamoeba polyphaga mimivirus (APMV).